The sequence spans 375 residues: MVNGRLRDTSLIVDLDALRHNIQEQKKVLPENSKILAVVKANAYGNGLIPVAQTAMTSGASGLCVAILDEALELRDNGIEAMTLVLGITSVEDALIAAQAGVSLTVGSLDWLEQYHQLAQVAKPKKPLKVHLGIDSGMGRIGFTEVAAFKQAVKLLDSPEFEFEGMFTHFATADSPDENYFNQQVQRWHQFVASLAELPPYVHMANSATGLWHRETITANTIRMGISMYGQNPSGRDLKLTLDLQPVSSLVSSISFVKQLKAGRSVSYGATYTAEQDEWLATLPIGYADGYPRCMTGYKVLVDGQFCDIAGRVCMDQMMIRLPKYYPVGTPVVLMGKSGDQEITATDLAERAGTINYEILTNISNRVHRIYRQSK.

Lys40 functions as the Proton acceptor; specific for D-alanine in the catalytic mechanism. Lys40 bears the N6-(pyridoxal phosphate)lysine mark. Substrate is bound at residue Arg140. Tyr268 (proton acceptor; specific for L-alanine) is an active-site residue. Met315 is a binding site for substrate.

It belongs to the alanine racemase family. The cofactor is pyridoxal 5'-phosphate.

It catalyses the reaction L-alanine = D-alanine. It participates in amino-acid biosynthesis; D-alanine biosynthesis; D-alanine from L-alanine: step 1/1. In terms of biological role, catalyzes the interconversion of L-alanine and D-alanine. May also act on other amino acids. This chain is Alanine racemase (alr), found in Limosilactobacillus reuteri (strain DSM 20016) (Lactobacillus reuteri).